The sequence spans 595 residues: P2X purinoceptor 7 (595 aa).

The Cytoplasmic portion of the chain corresponds to 1 to 22; sequence MPACCSWNDVFQYETNKVTRIQ. Residue Cys4 is the site of S-palmitoyl cysteine attachment. A helical membrane pass occupies residues 23–46; it reads SVNYGTIKWILHMTVFSYVSFALM. Residues 47–328 are Extracellular-facing; the sequence is SDKLYQRKEP…ILVFGTGGKF (282 aa). Asn74 is a glycosylation site (N-linked (GlcNAc...) asparagine). 3 disulfides stabilise this stretch: Cys119-Cys168, Cys129-Cys152, and Cys135-Cys162. Arg125 carries the post-translational modification ADP-ribosylarginine. Asn187 carries N-linked (GlcNAc...) asparagine glycosylation. Thr189 is an ATP binding site. N-linked (GlcNAc...) asparagine glycosylation is found at Asn202 and Asn213. A disulfide bridge connects residues Cys216 and Cys226. N-linked (GlcNAc...) asparagine glycosylation is present at Asn241. A disulfide bond links Cys260 and Cys269. N-linked (GlcNAc...) asparagine glycosylation is present at Asn284. ATP contacts are provided by Arg294 and Lys311. Residues 329–353 form a helical membrane-spanning segment; the sequence is DIIQLVVYIGSTLSYFGLATVCIDL. Ser342 contacts Na(+). Residues 354–595 are Cytoplasmic-facing; it reads IINTYASTCC…GQYSGFKYPY (242 aa). Residues 360–377 form a C-cys anchor region; sequence STCCRSRVYPSCKCCEPC. 4 S-palmitoyl cysteine lipidation sites follow: Cys362, Cys363, Cys374, and Cys377. A cytoplasmic ballast region spans residues 395–595; it reads KPTLKYVSFV…GQYSGFKYPY (201 aa). Residues Cys479, Cys499, and Cys506 each coordinate Zn(2+). 4 residues coordinate GTP: Arg546, His547, Tyr550, and Ala567. Cys572 is a Zn(2+) binding site. GTP contacts are provided by Lys583, Ser589, and Gly590.

Belongs to the P2X receptor family. Homotrimer. Interacts with LAMA3, ITGB2, ACTB, ACTN4, SVIL, MPP3, HSPA1, HSPCB, HSPA8, PIK230 and PTPRB. Interacts (via C-terminus) with EMP2. In terms of processing, phosphorylation results in its inactivation. ADP-ribosylation at Arg-125 is necessary and sufficient to activate P2RX7 and gate the channel. Post-translationally, palmitoylation of several cysteines in the C-terminal cytoplasmic tail is required for efficient localization to cell surface. Palmitoylation prevents channel desensitization by physically anchoring the palmitoylated groups to the membrane.

It localises to the cell membrane. It carries out the reaction Ca(2+)(in) = Ca(2+)(out). The enzyme catalyses K(+)(in) = K(+)(out). It catalyses the reaction Na(+)(in) = Na(+)(out). Its activity is regulated as follows. Activated by high extracellular ATP levels (0.1-2.5 mM). The synthetic analog 2'(3')-O-(4-benzoylbenzoyl)ATP (BzATP) acts as a potent agonist. Does not undergo desensitization, instead, undergoes a facilitation process where currents progressively increase with repetitive or prolonged agonist application. Palmitoylation prevents channel desensitization. The permeability of the P2RX7 channel is modulated by the amount of cholesterol in the plasma membrane. In terms of biological role, ATP-gated nonselective transmembrane cation channel that requires high millimolar concentrations of ATP for activation. Upon ATP binding, it rapidly opens to allow the influx of small cations Na(+) and Ca(2+), and the K(+) efflux. Also has the ability to form a large pore in the cell membrane, allowing the passage of large cationic molecules. In microglia, may mediate the transmembrane transport of exogenous NADPH. In immune cells, P2RX7 acts as a molecular sensor in pathological inflammatory states by detecting and responding to high local concentrations of extracellar ATP. In microglial cells, P2RX7 activation leads to the release of pro-inflammatory cytokines, such as IL-1beta and IL-18, through the activation of the NLRP3 inflammasome and caspase-1. Cooperates with KCNK6 to activate NLRP3 inflammasome. Activates death pathways leading to apoptosis and autophagy. Activates death pathways leading to pyroptosis. Functionally, has a higher affinity for ATP, slower deactivation and an increased propensity to form large cation-permeable pores. In Rattus norvegicus (Rat), this protein is P2X purinoceptor 7 (P2rx7).